Consider the following 206-residue polypeptide: Large ribosomal subunit protein uL4 (206 aa).

Residues 65-85 (KQKGSGGARHGDRKAPQFRGG) form a disordered region.

The protein belongs to the universal ribosomal protein uL4 family. In terms of assembly, part of the 50S ribosomal subunit.

Functionally, one of the primary rRNA binding proteins, this protein initially binds near the 5'-end of the 23S rRNA. It is important during the early stages of 50S assembly. It makes multiple contacts with different domains of the 23S rRNA in the assembled 50S subunit and ribosome. In terms of biological role, forms part of the polypeptide exit tunnel. The polypeptide is Large ribosomal subunit protein uL4 (Parvibaculum lavamentivorans (strain DS-1 / DSM 13023 / NCIMB 13966)).